We begin with the raw amino-acid sequence, 472 residues long: Threonine synthase-like 2 (472 aa).

An N6-(pyridoxal phosphate)lysine modification is found at Lys113.

This sequence belongs to the threonine synthase family. Requires pyridoxal 5'-phosphate as cofactor.

Its function is as follows. Acts as a catabolic phospho-lyase on both gamma- and beta-phosphorylated substrates. Degrades O-phospho-threonine (PThr) to alpha-ketobutyrate, ammonia and phosphate. This chain is Threonine synthase-like 2 (thnsl2), found in Xenopus laevis (African clawed frog).